A 188-amino-acid polypeptide reads, in one-letter code: SRP-independent targeting protein 3 (188 aa).

The chain crosses the membrane as a helical span at residues 27–47; that stretch reads TIIMYIRILYCSSIGISWIIY. Residue S157 is modified to Phosphoserine. The segment at 157–188 is disordered; it reads SLFGGMGQTGPKTDKKSIEEAERAGNAGVKAE. Residues 168 to 179 are compositionally biased toward basic and acidic residues; sequence KTDKKSIEEAER.

It belongs to the PHO88 family. As to quaternary structure, interacts with ENV10/SND2. ENV10/SND2 and PHO88/SND3 form a complex with the translocon in the endoplasmic reticulum membrane.

Its subcellular location is the endoplasmic reticulum membrane. The protein resides in the mitochondrion. In terms of biological role, functions in the SND pathway, a SRP (signal recognition particle) and GET (guided entry of tail-anchored proteins) independent pathway for targeting a broad range of substrate proteins to the endoplasmic reticulum. SND functions in parallel to GET in targeting proteins with downstream hydrophobic motifs. Involved in inorganic phosphate uptake. Also involved in telomere length regulation and maintenance. This Saccharomyces cerevisiae (strain ATCC 204508 / S288c) (Baker's yeast) protein is SRP-independent targeting protein 3.